The primary structure comprises 186 residues: UPF0200 protein Mbar_A0975 (186 aa).

8-15 is a binding site for ATP; sequence GMPASGKS.

Belongs to the UPF0200 family.

In Methanosarcina barkeri (strain Fusaro / DSM 804), this protein is UPF0200 protein Mbar_A0975.